We begin with the raw amino-acid sequence, 311 residues long: Formimidoylglutamase (311 aa).

His127, Asp152, His154, Asp156, Cys236, and Asp238 together coordinate Mn(2+).

The protein belongs to the arginase family. Mn(2+) serves as cofactor.

It catalyses the reaction N-formimidoyl-L-glutamate + H2O = formamide + L-glutamate. The protein operates within amino-acid degradation; L-histidine degradation into L-glutamate; L-glutamate from N-formimidoyl-L-glutamate (hydrolase route): step 1/1. Catalyzes the conversion of N-formimidoyl-L-glutamate to L-glutamate and formamide. The chain is Formimidoylglutamase from Macrococcus caseolyticus (strain JCSC5402) (Macrococcoides caseolyticum).